Here is an 861-residue protein sequence, read N- to C-terminus: Ribosome biogenesis protein BOP1 homolog (861 aa).

Residues 1 to 237 (MVANKSKATK…GDTSDEEDIR (237 aa)) form a disordered region. The span at 29–45 (NGRSTKQPEADSDQSAS) shows a compositional bias: polar residues. Acidic residues-rich tracts occupy residues 62-77 (DDGD…DASD) and 87-143 (SDSD…EDLA). Composition is skewed to basic and acidic residues over residues 144-156 (EPEK…EGSK), 174-190 (ETKK…EKLA), and 212-223 (PERKTGRLKNSD). WD repeat units lie at residues 522 to 561 (GHTD…CIKT), 563 to 603 (PTGD…CLLS), 692 to 730 (KSKG…LLKK), 733 to 772 (PSCK…RPYQ), 776 to 815 (LHFS…DLMQ), and 831 to 861 (VNDF…RLYT).

The protein belongs to the WD repeat BOP1/ERB1 family.

The protein resides in the nucleus. The protein localises to the nucleolus. It is found in the nucleoplasm. Required for maturation of ribosomal RNAs and formation of the large ribosomal subunit. The sequence is that of Ribosome biogenesis protein BOP1 homolog from Culex quinquefasciatus (Southern house mosquito).